The sequence spans 107 residues: UPF0060 membrane protein glr4174 (107 aa).

4 helical membrane-spanning segments follow: residues Met-1–Trp-21, Leu-26–Leu-46, Ala-58–Glu-78, and Leu-87–Pro-107.

It belongs to the UPF0060 family.

Its subcellular location is the cell inner membrane. This Gloeobacter violaceus (strain ATCC 29082 / PCC 7421) protein is UPF0060 membrane protein glr4174.